The following is a 595-amino-acid chain: Aspartate--tRNA ligase (595 aa).

Glu173 contacts L-aspartate. Residues 197–200 form an aspartate region; the sequence is QLFK. Arg219 contacts L-aspartate. Residues 219 to 221 and Gln228 contribute to the ATP site; that span reads RDE. His449 contributes to the L-aspartate binding site. Glu483 contacts ATP. Arg490 contributes to the L-aspartate binding site. An ATP-binding site is contributed by 535–538; that stretch reads GLDR.

The protein belongs to the class-II aminoacyl-tRNA synthetase family. Type 1 subfamily. In terms of assembly, homodimer.

Its subcellular location is the cytoplasm. The enzyme catalyses tRNA(Asp) + L-aspartate + ATP = L-aspartyl-tRNA(Asp) + AMP + diphosphate. In terms of biological role, catalyzes the attachment of L-aspartate to tRNA(Asp) in a two-step reaction: L-aspartate is first activated by ATP to form Asp-AMP and then transferred to the acceptor end of tRNA(Asp). In Shewanella sediminis (strain HAW-EB3), this protein is Aspartate--tRNA ligase.